The following is a 438-amino-acid chain: Trigger factor (438 aa).

Residues 160-231 (SDQVTIEEQG…IMDVKTKQLQ (72 aa)) enclose the PPIase FKBP-type domain. Residues 407–438 (AQLSGPQAETVAADQGEQQAEGQEESAEKSEE) form a disordered region. Residues 418–427 (AADQGEQQAE) show a composition bias toward low complexity.

The protein belongs to the FKBP-type PPIase family. Tig subfamily.

Its subcellular location is the cytoplasm. It catalyses the reaction [protein]-peptidylproline (omega=180) = [protein]-peptidylproline (omega=0). In terms of biological role, involved in protein export. Acts as a chaperone by maintaining the newly synthesized protein in an open conformation. Functions as a peptidyl-prolyl cis-trans isomerase. The polypeptide is Trigger factor (Deinococcus deserti (strain DSM 17065 / CIP 109153 / LMG 22923 / VCD115)).